We begin with the raw amino-acid sequence, 270 residues long: 4-hydroxy-tetrahydrodipicolinate reductase (270 aa).

Residues 9 to 14 and E35 contribute to the NAD(+) site; that span reads GAGGRM. R36 is a binding site for NADP(+). NAD(+) contacts are provided by residues 99-101 and 123-126; these read GTT and ASNY. Catalysis depends on H156, which acts as the Proton donor/acceptor. Residue H157 participates in (S)-2,3,4,5-tetrahydrodipicolinate binding. K160 functions as the Proton donor in the catalytic mechanism. A (S)-2,3,4,5-tetrahydrodipicolinate-binding site is contributed by 166–167; the sequence is GT.

It belongs to the DapB family.

The protein resides in the cytoplasm. The enzyme catalyses (S)-2,3,4,5-tetrahydrodipicolinate + NAD(+) + H2O = (2S,4S)-4-hydroxy-2,3,4,5-tetrahydrodipicolinate + NADH + H(+). The catalysed reaction is (S)-2,3,4,5-tetrahydrodipicolinate + NADP(+) + H2O = (2S,4S)-4-hydroxy-2,3,4,5-tetrahydrodipicolinate + NADPH + H(+). Its pathway is amino-acid biosynthesis; L-lysine biosynthesis via DAP pathway; (S)-tetrahydrodipicolinate from L-aspartate: step 4/4. Catalyzes the conversion of 4-hydroxy-tetrahydrodipicolinate (HTPA) to tetrahydrodipicolinate. This chain is 4-hydroxy-tetrahydrodipicolinate reductase, found in Actinobacillus succinogenes (strain ATCC 55618 / DSM 22257 / CCUG 43843 / 130Z).